Here is an 879-residue protein sequence, read N- to C-terminus: Metabotropic glutamate receptor 3 (879 aa).

The first 22 residues, 1 to 22, serve as a signal peptide directing secretion; sequence MKMLTRLQVLTLALFSKGFLLS. The Extracellular portion of the chain corresponds to 23-576; that stretch reads LGDHNFLRRE…EDYIRWEDAW (554 aa). Cysteines 57 and 99 form a disulfide. Residues serine 151 and 172 to 174 contribute to the L-glutamate site; that span reads AST. The N-linked (GlcNAc...) asparagine glycan is linked to asparagine 209. Tyrosine 222 serves as a coordination point for L-glutamate. 7 disulfides stabilise this stretch: cysteine 240/cysteine 527, cysteine 361/cysteine 373, cysteine 412/cysteine 419, cysteine 509/cysteine 528, cysteine 513/cysteine 531, cysteine 534/cysteine 546, and cysteine 549/cysteine 562. Asparagine 292 is a glycosylation site (N-linked (GlcNAc...) asparagine). L-glutamate is bound at residue aspartate 301. Lysine 389 lines the L-glutamate pocket. Asparagine 414 and asparagine 439 each carry an N-linked (GlcNAc...) asparagine glycan. The helical transmembrane segment at 577–599 threads the bilayer; it reads VIGPVTIACLGFMCTCMVVTVFI. The Cytoplasmic portion of the chain corresponds to 600 to 613; that stretch reads KHNNTPLVKASGRE. A helical membrane pass occupies residues 614–634; the sequence is LCYILLFGVGLSYCMTFFFIA. Residues 635-645 lie on the Extracellular side of the membrane; it reads KPSPVICALRR. The helical transmembrane segment at 646-664 threads the bilayer; sequence LGLGSSFAICYSALLTKTN. Over 665-688 the chain is Cytoplasmic; sequence CIARIFDGVKNGAQRPKFISPSSQ. The chain crosses the membrane as a helical span at residues 689–709; it reads VFICLGLILVQIVMVSVWLIL. At 710–734 the chain is on the extracellular side; that stretch reads EAPGTRRYTLAEKRETVILKCNVKD. A helical membrane pass occupies residues 735–756; sequence SSMLISLTYDVILVILCTVYAF. Topologically, residues 757-769 are cytoplasmic; sequence KTRKCPENFNEAK. A helical transmembrane segment spans residues 770–792; that stretch reads FIGFTMYTTCIIWLAFLPIFYVT. Topologically, residues 793 to 802 are extracellular; that stretch reads SSDYRVQTTT. A helical membrane pass occupies residues 803-828; sequence MCISVSLSGFVVLGCLFAPKVHIILF. The Cytoplasmic segment spans residues 829-879; the sequence is QPQKNVVTHRLHLNRFSVSGTGTTYSQSSASTYVPTVCNGREVLDSTTSSL.

This sequence belongs to the G-protein coupled receptor 3 family. As to quaternary structure, interacts with TAMALIN.

The protein resides in the cell membrane. In terms of biological role, G-protein coupled receptor for glutamate. Ligand binding causes a conformation change that triggers signaling via guanine nucleotide-binding proteins (G proteins) and modulates the activity of down-stream effectors. Signaling inhibits adenylate cyclase activity. This is Metabotropic glutamate receptor 3 (GRM3) from Pongo abelii (Sumatran orangutan).